A 146-amino-acid polypeptide reads, in one-letter code: MGRFIFVSFGLLVLFLSLSGTAADCPSDWSSYEGHCYKPFNEPKNWADAENFCTQQHTGSHLVSFQSTEEADFVVKLAFQTFDYGIFWMGLSKIWNQCNWQWSNAAMLKYTDWAEESYCVYFKSTNNKWRSITCRMIANFVCEFQA.

The signal sequence occupies residues 1 to 23 (MGRFIFVSFGLLVLFLSLSGTAA). In terms of domain architecture, C-type lectin spans 24 to 146 (DCPSDWSSYE…IANFVCEFQA (123 aa)). Cystine bridges form between C25–C36, C53–C142, and C119–C134. Residues S64, Q66, and E70 each coordinate Ca(2+). Position 143 (E143) interacts with Ca(2+).

It belongs to the snaclec family. Heterodimer with subunit A of agkisacutacin or AaACP; disulfide-linked. In terms of tissue distribution, expressed by the venom gland.

The protein localises to the secreted. Anticoagulant protein which binds to the gamma-carboxyglutamic acid-domain regions of factors IX and factor X in the presence of calcium with a 1 to 1 stoichiometry. Also inhibits platelet aggregation by binding to platelet glycoprotein Ibalpha (GP1BA) and functioning as a blocker of vWF. Is devoid of hemorrhagic and lethal activities. Possesses antithrombotic and thrombolytic activities. Also hydrolyzes the Aalpha-chain of fibrinogen. Does not affect the Bbeta-chain and the gamma chain. The sequence is that of Snaclec anticoagulant protein subunit B from Deinagkistrodon acutus (Hundred-pace snake).